Consider the following 261-residue polypeptide: Putative carbamate hydrolase RutD (261 aa).

Residues 14–119 (PTILLSSGLG…LINAWSKADP (106 aa)) form the AB hydrolase-1 domain.

The protein belongs to the AB hydrolase superfamily. Hydrolase RutD family.

The catalysed reaction is carbamate + 2 H(+) = NH4(+) + CO2. In terms of biological role, involved in pyrimidine catabolism. May facilitate the hydrolysis of carbamate, a reaction that can also occur spontaneously. This is Putative carbamate hydrolase RutD from Agrobacterium fabrum (strain C58 / ATCC 33970) (Agrobacterium tumefaciens (strain C58)).